Here is a 350-residue protein sequence, read N- to C-terminus: Outer membrane protein A (350 aa).

An N-terminal signal peptide occupies residues 1 to 21 (MKKTAIAIAVALAGFATVAQA). Transmembrane regions (beta stranded) follow at residues 27–37 (TWYAGAKLGWS), 55–66 (QLGAGAFGGYQV), 70–78 (VGFEMGYDW), 96–107 (QGVQLTAKLGYP), 112–120 (LDVYTRLGG), 146–155 (PVFAGGIEYA), 160–167 (IATRLEYQ), and 186–194 (LLSVGVSYR). Repeat copies occupy residues 205 to 206 (AP), 207 to 208 (AP), 209 to 210 (AP), and 211 to 212 (AP). Residues 205–212 (APAPAPAP) form a 4 X 2 AA tandem repeats of A-P region. Residues 214 to 342 (VQTKHFTLKS…RVEIEVKGVK (129 aa)) form the OmpA-like domain. Cysteines 315 and 327 form a disulfide.

This sequence belongs to the outer membrane OOP (TC 1.B.6) superfamily. OmpA family. In terms of assembly, monomer and homodimer.

Its subcellular location is the cell outer membrane. Its function is as follows. With TolR probably plays a role in maintaining the position of the peptidoglycan cell wall in the periplasm. Acts as a porin with low permeability that allows slow penetration of small solutes; an internal gate slows down solute passage. In terms of biological role, required for conjugation with F-type plasmids; probably serves as the mating receptor on recipient cells. The polypeptide is Outer membrane protein A (Salmonella typhi).